The sequence spans 52 residues: Large ribosomal subunit protein eL39 (52 aa).

This sequence belongs to the eukaryotic ribosomal protein eL39 family.

The sequence is that of Large ribosomal subunit protein eL39 from Desulfurococcus amylolyticus (strain DSM 18924 / JCM 16383 / VKM B-2413 / 1221n) (Desulfurococcus kamchatkensis).